A 296-amino-acid chain; its full sequence is Formamidopyrimidine-DNA glycosylase (296 aa).

Pro-2 (schiff-base intermediate with DNA) is an active-site residue. Glu-3 functions as the Proton donor in the catalytic mechanism. Residue Lys-58 is the Proton donor; for beta-elimination activity of the active site. DNA contacts are provided by His-104, Arg-126, and Lys-169. The FPG-type zinc finger occupies 260–296 (SVYDREGQACGTPGCGGTVARIVQAGRSTFYCAACQK). The active-site Proton donor; for delta-elimination activity is Arg-286.

The protein belongs to the FPG family. As to quaternary structure, monomer. Zn(2+) is required as a cofactor.

It catalyses the reaction Hydrolysis of DNA containing ring-opened 7-methylguanine residues, releasing 2,6-diamino-4-hydroxy-5-(N-methyl)formamidopyrimidine.. The catalysed reaction is 2'-deoxyribonucleotide-(2'-deoxyribose 5'-phosphate)-2'-deoxyribonucleotide-DNA = a 3'-end 2'-deoxyribonucleotide-(2,3-dehydro-2,3-deoxyribose 5'-phosphate)-DNA + a 5'-end 5'-phospho-2'-deoxyribonucleoside-DNA + H(+). Functionally, involved in base excision repair of DNA damaged by oxidation or by mutagenic agents. Acts as a DNA glycosylase that recognizes and removes damaged bases. Has a preference for oxidized purines, such as 7,8-dihydro-8-oxoguanine (8-oxoG). Has AP (apurinic/apyrimidinic) lyase activity and introduces nicks in the DNA strand. Cleaves the DNA backbone by beta-delta elimination to generate a single-strand break at the site of the removed base with both 3'- and 5'-phosphates. This Rhizobium etli (strain CIAT 652) protein is Formamidopyrimidine-DNA glycosylase.